We begin with the raw amino-acid sequence, 147 residues long: Small ribosomal subunit protein uS12 (147 aa).

Belongs to the universal ribosomal protein uS12 family. As to quaternary structure, part of the 30S ribosomal subunit.

Its function is as follows. With S4 and S5 plays an important role in translational accuracy. Located at the interface of the 30S and 50S subunits. The chain is Small ribosomal subunit protein uS12 from Methanococcus aeolicus (strain ATCC BAA-1280 / DSM 17508 / OCM 812 / Nankai-3).